The chain runs to 98 residues: MSLVHMNIGLAFTVAFLGLLMYRSHLMSSLLCLEGMMLTLFIMSSIMVLNMHFTLASMLPIILLVFAACEAAVGLSLLVMVSNTYGVDYVQNLNLLQC.

3 helical membrane-spanning segments follow: residues 1 to 21, 29 to 49, and 61 to 81; these read MSLV…GLLM, SLLC…IMVL, and IILL…LVMV.

This sequence belongs to the complex I subunit 4L family. In terms of assembly, core subunit of respiratory chain NADH dehydrogenase (Complex I) which is composed of 45 different subunits.

Its subcellular location is the mitochondrion inner membrane. The enzyme catalyses a ubiquinone + NADH + 5 H(+)(in) = a ubiquinol + NAD(+) + 4 H(+)(out). Core subunit of the mitochondrial membrane respiratory chain NADH dehydrogenase (Complex I) which catalyzes electron transfer from NADH through the respiratory chain, using ubiquinone as an electron acceptor. Part of the enzyme membrane arm which is embedded in the lipid bilayer and involved in proton translocation. This is NADH-ubiquinone oxidoreductase chain 4L (MT-ND4L) from Pseudosoriculus fumidus (Taiwanese brown-toothed shrew).